A 208-amino-acid chain; its full sequence is Thymidylate kinase (208 aa).

Position 10-17 (10-17 (GLEGAGKS)) interacts with ATP.

Belongs to the thymidylate kinase family.

The enzyme catalyses dTMP + ATP = dTDP + ADP. Phosphorylation of dTMP to form dTDP in both de novo and salvage pathways of dTTP synthesis. In Pseudoalteromonas translucida (strain TAC 125), this protein is Thymidylate kinase.